A 296-amino-acid polypeptide reads, in one-letter code: Phosphatidylserine decarboxylase proenzyme (296 aa).

Active-site charge relay system; for autoendoproteolytic cleavage activity residues include Asp113, His169, and Ser256. The active-site Schiff-base intermediate with substrate; via pyruvic acid; for decarboxylase activity is Ser256. Ser256 is modified (pyruvic acid (Ser); by autocatalysis).

Belongs to the phosphatidylserine decarboxylase family. PSD-B subfamily. Prokaryotic type II sub-subfamily. In terms of assembly, heterodimer of a large membrane-associated beta subunit and a small pyruvoyl-containing alpha subunit. Pyruvate serves as cofactor. Post-translationally, is synthesized initially as an inactive proenzyme. Formation of the active enzyme involves a self-maturation process in which the active site pyruvoyl group is generated from an internal serine residue via an autocatalytic post-translational modification. Two non-identical subunits are generated from the proenzyme in this reaction, and the pyruvate is formed at the N-terminus of the alpha chain, which is derived from the carboxyl end of the proenzyme. The autoendoproteolytic cleavage occurs by a canonical serine protease mechanism, in which the side chain hydroxyl group of the serine supplies its oxygen atom to form the C-terminus of the beta chain, while the remainder of the serine residue undergoes an oxidative deamination to produce ammonia and the pyruvoyl prosthetic group on the alpha chain. During this reaction, the Ser that is part of the protease active site of the proenzyme becomes the pyruvoyl prosthetic group, which constitutes an essential element of the active site of the mature decarboxylase.

The protein localises to the cell membrane. The enzyme catalyses a 1,2-diacyl-sn-glycero-3-phospho-L-serine + H(+) = a 1,2-diacyl-sn-glycero-3-phosphoethanolamine + CO2. Its pathway is phospholipid metabolism; phosphatidylethanolamine biosynthesis; phosphatidylethanolamine from CDP-diacylglycerol: step 2/2. Its function is as follows. Catalyzes the formation of phosphatidylethanolamine (PtdEtn) from phosphatidylserine (PtdSer). The sequence is that of Phosphatidylserine decarboxylase proenzyme from Clostridium kluyveri (strain ATCC 8527 / DSM 555 / NBRC 12016 / NCIMB 10680 / K1).